A 447-amino-acid polypeptide reads, in one-letter code: Cysteine--tRNA ligase (447 aa).

Cysteine 28 contributes to the Zn(2+) binding site. A 'HIGH' region motif is present at residues 30–40 (PTVYNYIHIGN). 3 residues coordinate Zn(2+): cysteine 211, histidine 236, and glutamate 240. Residues 268–272 (KMSKS) carry the 'KMSKS' region motif. Lysine 271 contributes to the ATP binding site.

Belongs to the class-I aminoacyl-tRNA synthetase family. In terms of assembly, monomer. Zn(2+) is required as a cofactor.

The protein localises to the cytoplasm. The catalysed reaction is tRNA(Cys) + L-cysteine + ATP = L-cysteinyl-tRNA(Cys) + AMP + diphosphate. The chain is Cysteine--tRNA ligase from Streptococcus pyogenes serotype M1.